The sequence spans 269 residues: Xyloglucan endotransglucosylase/hydrolase protein 24 (269 aa).

An N-terminal signal peptide occupies residues 1 to 21; it reads MSPFKIFFFTTLLVAAFSVSA. In terms of domain architecture, GH16 spans 22-212; that stretch reads ADFNTDVNVA…WSKAPFMASY (191 aa). The active-site Nucleophile is the Glu98. Glu102 acts as the Proton donor in catalysis. Glu102 is a xyloglucan binding site. Asn106 carries N-linked (GlcNAc...) asparagine glycosylation. Xyloglucan is bound by residues 115–117, 125–127, 191–192, Gly196, and Arg256; these read HTN, DKE, and DW. Cysteines 251 and 265 form a disulfide.

The protein belongs to the glycosyl hydrolase 16 family. XTH group 2 subfamily. Post-translationally, contains at least one intrachain disulfide bond essential for its enzymatic activity. N-glycosylated; essential for its enzymatic activity. Highly expressed. Predominantly expressed in stems. Expressed in shoot apical meristems, also found in seedlings and meristems.

It localises to the secreted. The protein localises to the cell wall. Its subcellular location is the extracellular space. It is found in the apoplast. It carries out the reaction breaks a beta-(1-&gt;4) bond in the backbone of a xyloglucan and transfers the xyloglucanyl segment on to O-4 of the non-reducing terminal glucose residue of an acceptor, which can be a xyloglucan or an oligosaccharide of xyloglucan.. Its function is as follows. Catalyzes xyloglucan endohydrolysis (XEH) and/or endotransglycosylation (XET). Cleaves and religates xyloglucan polymers, an essential constituent of the primary cell wall, and thereby participates in cell wall construction of growing tissues. May be required during development to modify the walls of cells under mechanical stress. The sequence is that of Xyloglucan endotransglucosylase/hydrolase protein 24 (XTH24) from Arabidopsis thaliana (Mouse-ear cress).